Reading from the N-terminus, the 879-residue chain is Phosphoenolpyruvate carboxylase (879 aa).

Residues H138 and K545 contribute to the active site.

The protein belongs to the PEPCase type 1 family. Requires Mg(2+) as cofactor.

The enzyme catalyses oxaloacetate + phosphate = phosphoenolpyruvate + hydrogencarbonate. Forms oxaloacetate, a four-carbon dicarboxylic acid source for the tricarboxylic acid cycle. The chain is Phosphoenolpyruvate carboxylase from Haemophilus influenzae (strain PittEE).